A 333-amino-acid chain; its full sequence is L-lactate dehydrogenase B chain (333 aa).

Residues 29–57 and Arg-99 contribute to the NAD(+) site; that span reads GQVG…LEDK. The substrate site is built by Arg-106, Asn-138, and Arg-169. Asn-138 contributes to the NAD(+) binding site. His-193 (proton acceptor) is an active-site residue. Residue Thr-248 coordinates substrate.

Belongs to the LDH/MDH superfamily. LDH family. As to quaternary structure, homotetramer.

The protein localises to the cytoplasm. It carries out the reaction (S)-lactate + NAD(+) = pyruvate + NADH + H(+). It participates in fermentation; pyruvate fermentation to lactate; (S)-lactate from pyruvate: step 1/1. Interconverts simultaneously and stereospecifically pyruvate and lactate with concomitant interconversion of NADH and NAD(+). The polypeptide is L-lactate dehydrogenase B chain (LDHB) (Gallus gallus (Chicken)).